The primary structure comprises 161 residues: 2-C-methyl-D-erythritol 2,4-cyclodiphosphate synthase (161 aa).

Positions 10 and 12 each coordinate a divalent metal cation. 4-CDP-2-C-methyl-D-erythritol 2-phosphate-binding positions include 10–12 and 36–37; these read DVH and HS. Residue His-44 participates in a divalent metal cation binding. Residues 58 to 60, 63 to 67, 102 to 108, 134 to 137, Phe-141, and Arg-144 contribute to the 4-CDP-2-C-methyl-D-erythritol 2-phosphate site; these read DIG, FPDTD, AQAPKMA, and TTTE.

It belongs to the IspF family. As to quaternary structure, homotrimer. The cofactor is a divalent metal cation.

It carries out the reaction 4-CDP-2-C-methyl-D-erythritol 2-phosphate = 2-C-methyl-D-erythritol 2,4-cyclic diphosphate + CMP. It participates in isoprenoid biosynthesis; isopentenyl diphosphate biosynthesis via DXP pathway; isopentenyl diphosphate from 1-deoxy-D-xylulose 5-phosphate: step 4/6. Involved in the biosynthesis of isopentenyl diphosphate (IPP) and dimethylallyl diphosphate (DMAPP), two major building blocks of isoprenoid compounds. Catalyzes the conversion of 4-diphosphocytidyl-2-C-methyl-D-erythritol 2-phosphate (CDP-ME2P) to 2-C-methyl-D-erythritol 2,4-cyclodiphosphate (ME-CPP) with a corresponding release of cytidine 5-monophosphate (CMP). This Shewanella baltica (strain OS155 / ATCC BAA-1091) protein is 2-C-methyl-D-erythritol 2,4-cyclodiphosphate synthase.